Consider the following 204-residue polypeptide: Terpene cyclase trt1 (204 aa).

A run of 5 helical transmembrane segments spans residues 44–64 (FMSI…YPIA), 67–87 (HWAG…FIVA), 103–122 (FARL…HLAL), 132–154 (FFWS…LVCR), and 169–189 (WFYI…FFYF).

The protein belongs to the paxB family.

The protein localises to the membrane. It functions in the pathway secondary metabolite biosynthesis; terpenoid biosynthesis. Functionally, terpene cyclase; part of the gene cluster that mediates the biosynthesis of terretonin, a fungal meroterpenoid that acts as a mycotoxin. The first step of the pathway is the synthesis of 3,5-dimethylorsellinic acid (DMOA) by the polyketide synthase trt4. DMOA is then prenylated into farnesyl-DMOA by the polyprenyl transferase trt2. Methylation by the methyltransferase trt5 then leads to farnesyl-DMOA methyl ester which is further subject to epoxidation by the FAD-dependent monooxygenase trt8 to yield epoxyfarnesyl-DMOA methyl ester. Cyclization of epoxyfarnesyl-DMOA methyl ester by the terpene cyclase trt1 leads to a tetracycle intermediate which is in turn converted to preterretonin. Dehydrogenase trt9 comes next to transform preterretonin to preterrenoid. The FAD-dependent monooxygenase trt3 is then required for the C-hydroxylation at C16 of preterrenoid to yield terrenoid. The cytochrome P450 trt6 catalyzes three successive oxidations to transform terrenoid into an unstable intermediate, which then undergoes the D-ring expansion and unusual rearrangement of the methoxy group to afford the core skeleton of terretonin. Trt14 catalyzes the D-ring expansion of terretonin involving intramolecular methoxy rearrangement as well as the hydrolysis of the expanded D-ring and the methyl ester moiety. Finally, the nonheme iron-dependent dioxygenase trt7 accomplishes the last two oxidation reactions steps to complete the biosynthesis of terretonin. Terretonin C is produced via spontaneous decarboxylation of the terretonin precursor. Another shunt product of the terretonin biosynthesis is dihydrofarnesyl-DMOA, derived from epoxyfarnesyl-DMOA through hydrolysis of the epoxide. This Aspergillus terreus (strain NIH 2624 / FGSC A1156) protein is Terpene cyclase trt1.